The primary structure comprises 492 residues: G protein-activated inward rectifier potassium channel 1 (492 aa).

Topologically, residues 1–72 (MSALRRKLGD…LFTTLVDLKW (72 aa)) are cytoplasmic. The interval 16 to 35 (STSASGGGLPPPRAAPRGKR) is disordered. Residues 73–97 (RWNLFIFVLTYTVAWLFMASMWWVI) traverse the membrane as a helical segment. Residues 98–121 (AYMRGDLNKAHDDSYTPCVANVYN) are Extracellular-facing. The helical; Pore-forming intramembrane region spans 122–133 (FPSAFLFFIETE). Positions 134–140 (ATIGYGY) form an intramembrane region, pore-forming. Residues 135-140 (TIGYGY) carry the Selectivity filter motif. Topologically, residues 141 to 149 (RYITDKCPE) are extracellular. The chain crosses the membrane as a helical span at residues 150 to 171 (GIILFLFQSILGSIVDAFLIGC). At 172-492 (MFIKMSQPKK…LRKMNSDRFT (321 aa)) the chain is on the cytoplasmic side. A polyphosphoinositide (PIP2)-binding region spans residues 174 to 201 (IKMSQPKKRAETLMFSEHAAISMRDGKL). The disordered stretch occupies residues 452–492 (SDPMSQSVADLPPKLQKLSGGGRMEGNLPPKLRKMNSDRFT).

The protein belongs to the inward rectifier-type potassium channel (TC 1.A.2.1) family. KCNJ3 subfamily. As to quaternary structure, associates with KCNJ5/GIRK4 or KCNJ6/GIRK2 or KCNJ9/GIRK3 to form a G-protein activated heteromultimer pore-forming unit. The resulting inward current is much larger.

The protein localises to the membrane. The enzyme catalyses K(+)(in) = K(+)(out). Heteromultimer composed of KCNJ3/GIRK1 and KCNJ5/GIRK4 is activated by phosphatidylinositol 4,5 biphosphate (PtdIns(4,5)P2). Inward rectifier potassium channels are characterized by a greater tendency to allow potassium to flow into the cell rather than out of it. Their voltage dependence is regulated by the concentration of extracellular potassium; as external potassium is raised, the voltage range of the channel opening shifts to more positive voltages. The inward rectification is mainly due to the blockage of outward current by internal magnesium. This potassium channel is controlled by G proteins. This receptor plays a crucial role in regulating the heartbeat. The sequence is that of G protein-activated inward rectifier potassium channel 1 (KCNJ3) from Gallus gallus (Chicken).